Consider the following 237-residue polypeptide: Phosphoribosylaminoimidazole-succinocarboxamide synthase (237 aa).

It belongs to the SAICAR synthetase family.

It catalyses the reaction 5-amino-1-(5-phospho-D-ribosyl)imidazole-4-carboxylate + L-aspartate + ATP = (2S)-2-[5-amino-1-(5-phospho-beta-D-ribosyl)imidazole-4-carboxamido]succinate + ADP + phosphate + 2 H(+). The protein operates within purine metabolism; IMP biosynthesis via de novo pathway; 5-amino-1-(5-phospho-D-ribosyl)imidazole-4-carboxamide from 5-amino-1-(5-phospho-D-ribosyl)imidazole-4-carboxylate: step 1/2. This is Phosphoribosylaminoimidazole-succinocarboxamide synthase from Salmonella agona (strain SL483).